The chain runs to 391 residues: 3-ketoacyl-CoA thiolase (391 aa).

Catalysis depends on Cys95, which acts as the Acyl-thioester intermediate. Active-site proton acceptor residues include His347 and Cys377.

Belongs to the thiolase-like superfamily. Thiolase family. In terms of assembly, heterotetramer of two alpha chains (FadB) and two beta chains (FadA).

The protein localises to the cytoplasm. The catalysed reaction is an acyl-CoA + acetyl-CoA = a 3-oxoacyl-CoA + CoA. It participates in lipid metabolism; fatty acid beta-oxidation. Functionally, catalyzes the final step of fatty acid oxidation in which acetyl-CoA is released and the CoA ester of a fatty acid two carbons shorter is formed. The polypeptide is 3-ketoacyl-CoA thiolase (Pseudomonas savastanoi pv. phaseolicola (strain 1448A / Race 6) (Pseudomonas syringae pv. phaseolicola (strain 1448A / Race 6))).